The chain runs to 83 residues: uncharacterized protein (83 aa).

It belongs to the BolA/IbaG family.

This is an uncharacterized protein from Acinetobacter guillouiae (Acinetobacter genomosp. 11).